The sequence spans 97 residues: C-C motif chemokine 8 (97 aa).

A signal peptide spans 1–23; that stretch reads MKIYAVLLCLLLIAVPVSPEKLT. 2 cysteine pairs are disulfide-bonded: cysteine 32–cysteine 57 and cysteine 33–cysteine 73.

Belongs to the intercrine beta (chemokine CC) family. Monomer or homodimer; in equilibrium.

It localises to the secreted. Chemotactic factor that attracts monocytes. This protein can bind heparin. The polypeptide is C-C motif chemokine 8 (Ccl8) (Mus musculus (Mouse)).